The following is a 379-amino-acid chain: Anhydro-N-acetylmuramic acid kinase (379 aa).

9–16 provides a ligand contact to ATP; sequence GTSADGVD.

This sequence belongs to the anhydro-N-acetylmuramic acid kinase family.

It catalyses the reaction 1,6-anhydro-N-acetyl-beta-muramate + ATP + H2O = N-acetyl-D-muramate 6-phosphate + ADP + H(+). Its pathway is amino-sugar metabolism; 1,6-anhydro-N-acetylmuramate degradation. It participates in cell wall biogenesis; peptidoglycan recycling. Functionally, catalyzes the specific phosphorylation of 1,6-anhydro-N-acetylmuramic acid (anhMurNAc) with the simultaneous cleavage of the 1,6-anhydro ring, generating MurNAc-6-P. Is required for the utilization of anhMurNAc either imported from the medium or derived from its own cell wall murein, and thus plays a role in cell wall recycling. The sequence is that of Anhydro-N-acetylmuramic acid kinase from Prochlorococcus marinus (strain MIT 9313).